We begin with the raw amino-acid sequence, 343 residues long: Lipase chaperone (343 aa).

The helical transmembrane segment at isoleucine 7–lysine 27 threads the bilayer.

Belongs to the lipase chaperone family.

Its subcellular location is the cell inner membrane. In terms of biological role, may be involved in the folding of the extracellular lipase during its passage through the periplasm. This chain is Lipase chaperone (lifO), found in Acinetobacter baylyi (strain ATCC 33305 / BD413 / ADP1).